Here is a 211-residue protein sequence, read N- to C-terminus: Imidazole glycerol phosphate synthase subunit HisH (211 aa).

Residues Met-1–Met-211 form the Glutamine amidotransferase type-1 domain. The active-site Nucleophile is the Cys-79. Active-site residues include His-186 and Glu-188.

As to quaternary structure, heterodimer of HisH and HisF.

The protein localises to the cytoplasm. The catalysed reaction is 5-[(5-phospho-1-deoxy-D-ribulos-1-ylimino)methylamino]-1-(5-phospho-beta-D-ribosyl)imidazole-4-carboxamide + L-glutamine = D-erythro-1-(imidazol-4-yl)glycerol 3-phosphate + 5-amino-1-(5-phospho-beta-D-ribosyl)imidazole-4-carboxamide + L-glutamate + H(+). It catalyses the reaction L-glutamine + H2O = L-glutamate + NH4(+). The protein operates within amino-acid biosynthesis; L-histidine biosynthesis; L-histidine from 5-phospho-alpha-D-ribose 1-diphosphate: step 5/9. IGPS catalyzes the conversion of PRFAR and glutamine to IGP, AICAR and glutamate. The HisH subunit catalyzes the hydrolysis of glutamine to glutamate and ammonia as part of the synthesis of IGP and AICAR. The resulting ammonia molecule is channeled to the active site of HisF. The chain is Imidazole glycerol phosphate synthase subunit HisH from Geobacillus sp. (strain WCH70).